The chain runs to 155 residues: Deoxyuridine 5'-triphosphate nucleotidohydrolase (155 aa).

Residues 75-77 (RSG), asparagine 88, and 92-94 (TVD) each bind substrate.

This sequence belongs to the dUTPase family. It depends on Mg(2+) as a cofactor.

The enzyme catalyses dUTP + H2O = dUMP + diphosphate + H(+). The protein operates within pyrimidine metabolism; dUMP biosynthesis; dUMP from dCTP (dUTP route): step 2/2. This enzyme is involved in nucleotide metabolism: it produces dUMP, the immediate precursor of thymidine nucleotides and it decreases the intracellular concentration of dUTP so that uracil cannot be incorporated into DNA. In Caulobacter vibrioides (strain ATCC 19089 / CIP 103742 / CB 15) (Caulobacter crescentus), this protein is Deoxyuridine 5'-triphosphate nucleotidohydrolase.